Reading from the N-terminus, the 448-residue chain is tRNA-2-methylthio-N(6)-dimethylallyladenosine synthase (448 aa).

Positions 3 to 120 constitute an MTTase N-terminal domain; sequence KKLFIKTHGC…LPTMLDSRQG (118 aa). 6 residues coordinate [4Fe-4S] cluster: Cys12, Cys49, Cys83, Cys158, Cys162, and Cys165. One can recognise a Radical SAM core domain in the interval 144–376; that stretch reads TSDGATAFVS…QERLNQQTMQ (233 aa). Residues 379 to 444 form the TRAM domain; that stretch reads RRMVGNTERI…PNSLRGDLAS (66 aa).

This sequence belongs to the methylthiotransferase family. MiaB subfamily. In terms of assembly, monomer. Requires [4Fe-4S] cluster as cofactor.

The protein resides in the cytoplasm. It catalyses the reaction N(6)-dimethylallyladenosine(37) in tRNA + (sulfur carrier)-SH + AH2 + 2 S-adenosyl-L-methionine = 2-methylsulfanyl-N(6)-dimethylallyladenosine(37) in tRNA + (sulfur carrier)-H + 5'-deoxyadenosine + L-methionine + A + S-adenosyl-L-homocysteine + 2 H(+). Its function is as follows. Catalyzes the methylthiolation of N6-(dimethylallyl)adenosine (i(6)A), leading to the formation of 2-methylthio-N6-(dimethylallyl)adenosine (ms(2)i(6)A) at position 37 in tRNAs that read codons beginning with uridine. This chain is tRNA-2-methylthio-N(6)-dimethylallyladenosine synthase, found in Chromohalobacter salexigens (strain ATCC BAA-138 / DSM 3043 / CIP 106854 / NCIMB 13768 / 1H11).